Reading from the N-terminus, the 320-residue chain is Putative polysaccharide deacetylase (320 aa).

A NodB homology domain is found at 69-303; that stretch reads RSIESCFEYG…ITSKEGVWVA (235 aa).

The protein belongs to the polysaccharide deacetylase family. As to quaternary structure, homodimer.

Its subcellular location is the prospore. In terms of biological role, may deacetylate chitin. Required for spore formation. This Schizosaccharomyces pombe (strain 972 / ATCC 24843) (Fission yeast) protein is Putative polysaccharide deacetylase.